Here is a 564-residue protein sequence, read N- to C-terminus: Nucleoprotein (564 aa).

Residues 54-236 (LRKNKRGEED…VTKDESSINI (183 aa)) form a binding site for the cap structure m7GTP region. Mn(2+)-binding residues include aspartate 380 and glutamate 382. Zn(2+)-binding residues include glutamate 390, cysteine 497, histidine 500, and cysteine 525. Aspartate 529 contributes to the Mn(2+) binding site.

This sequence belongs to the arenaviridae nucleocapsid protein family. As to quaternary structure, homomultimerizes to form the nucleocapsid. Binds to viral genomic RNA. Interacts with glycoprotein G2. Interacts with protein Z; this interaction probably directs the encapsidated genome to budding sites. Interacts with protein L; this interaction does not interfere with Z-L interaction. Interacts with host IKBKE (via Protein kinase domain); the interaction inhibits IKBKE kinase activity.

The protein resides in the virion. The protein localises to the host cytoplasm. Its function is as follows. Encapsidates the genome, protecting it from nucleases. The encapsidated genomic RNA is termed the nucleocapsid (NC). Serves as template for viral transcription and replication. The increased presence of protein N in host cell does not seem to trigger the switch from transcription to replication as observed in other negative strain RNA viruses. Through the interaction with host IKBKE, strongly inhibits the phosphorylation and nuclear translocation of host IRF3, a protein involved in interferon activation pathway, leading to the inhibition of interferon-beta and IRF3-dependent promoters activation. Also encodes a functional 3'-5' exoribonuclease that degrades preferentially dsRNA substrates and thereby participates in the suppression of interferon induction. The polypeptide is Nucleoprotein (Calomys callosus (Large vesper mouse)).